A 541-amino-acid polypeptide reads, in one-letter code: Tetratricopeptide repeat protein 8 (541 aa).

A TPR 1 repeat occupies Y14–H47. The interval P118–Q137 is disordered. 7 TPR repeats span residues W251–V284, D285–E317, V318–H351, V352–N385, G386–E419, A423–H456, and A457–M490.

In terms of assembly, part of BBSome complex, that contains BBS1, BBS2, BBS4, BBS5, BBS7, BBS8/TTC8, BBS9 and BBIP10. Interacts with PCM1. Interacts with CCDC28B. Interacts with PKD1. Widely expressed.

The protein localises to the cytoplasm. Its subcellular location is the cytoskeleton. The protein resides in the microtubule organizing center. It is found in the centrosome. It localises to the cell projection. The protein localises to the cilium membrane. Its subcellular location is the centriolar satellite. The protein resides in the cilium. In terms of biological role, the BBSome complex is thought to function as a coat complex required for sorting of specific membrane proteins to the primary cilia. The BBSome complex is required for ciliogenesis but is dispensable for centriolar satellite function. This ciliogenic function is mediated in part by the Rab8 GDP/GTP exchange factor, which localizes to the basal body and contacts the BBSome. Rab8(GTP) enters the primary cilium and promotes extension of the ciliary membrane. Firstly the BBSome associates with the ciliary membrane and binds to RAB3IP/Rabin8, the guanosyl exchange factor (GEF) for Rab8 and then the Rab8-GTP localizes to the cilium and promotes docking and fusion of carrier vesicles to the base of the ciliary membrane. The BBSome complex, together with the LTZL1, controls SMO ciliary trafficking and contributes to the sonic hedgehog (SHH) pathway regulation. Required for proper BBSome complex assembly and its ciliary localization. In Homo sapiens (Human), this protein is Tetratricopeptide repeat protein 8 (TTC8).